A 280-amino-acid polypeptide reads, in one-letter code: Eukaryotic translation initiation factor 3 subunit F-1 (280 aa).

In terms of domain architecture, MPN spans 8–138 (VRVHPVVLFQ…LRAYVCIQLG (131 aa)).

It belongs to the eIF-3 subunit F family. Component of the eukaryotic translation initiation factor 3 (eIF-3) complex. The eIF-3 complex interacts with pix.

The protein localises to the cytoplasm. Its function is as follows. Component of the eukaryotic translation initiation factor 3 (eIF-3) complex, which is involved in protein synthesis of a specialized repertoire of mRNAs and, together with other initiation factors, stimulates binding of mRNA and methionyl-tRNAi to the 40S ribosome. The eIF-3 complex specifically targets and initiates translation of a subset of mRNAs involved in cell proliferation. The chain is Eukaryotic translation initiation factor 3 subunit F-1 from Drosophila erecta (Fruit fly).